The following is a 315-amino-acid chain: Leucine-rich repeat-containing protein 75B (315 aa).

The tract at residues 1–23 (MGARLGRRAGPEAGSEAGAAAGC) is disordered. The segment covering 11–23 (PEAGSEAGAAAGC) has biased composition (low complexity). 2 LRR repeats span residues 182–195 (LAVLDLSFTGLSDE) and 207–220 (LPRLTQLLLNGNRL). Positions 284–315 (PEGSAAGATTPASTWDSTAAGLGPEPQACCAR) are disordered. Residues 286–297 (GSAAGATTPAST) show a composition bias toward low complexity.

It belongs to the LRRC75 family.

Functionally, may suppress myogenic differentiation by modulating MYOG expression and Erk1/2 signaling. The sequence is that of Leucine-rich repeat-containing protein 75B from Homo sapiens (Human).